We begin with the raw amino-acid sequence, 254 residues long: Ribosomal RNA small subunit methyltransferase A (254 aa).

Residues N12, L14, G38, E59, D83, and N100 each contribute to the S-adenosyl-L-methionine site.

Belongs to the class I-like SAM-binding methyltransferase superfamily. rRNA adenine N(6)-methyltransferase family. RsmA subfamily.

Its subcellular location is the cytoplasm. The catalysed reaction is adenosine(1518)/adenosine(1519) in 16S rRNA + 4 S-adenosyl-L-methionine = N(6)-dimethyladenosine(1518)/N(6)-dimethyladenosine(1519) in 16S rRNA + 4 S-adenosyl-L-homocysteine + 4 H(+). In terms of biological role, specifically dimethylates two adjacent adenosines (A1518 and A1519) in the loop of a conserved hairpin near the 3'-end of 16S rRNA in the 30S particle. May play a critical role in biogenesis of 30S subunits. This Mycoplasma mobile (strain ATCC 43663 / 163K / NCTC 11711) (Mesomycoplasma mobile) protein is Ribosomal RNA small subunit methyltransferase A.